A 300-amino-acid chain; its full sequence is Ribosomal protein L11 methyltransferase (300 aa).

S-adenosyl-L-methionine contacts are provided by Thr-152, Gly-173, Asp-195, and Asn-234.

The protein belongs to the methyltransferase superfamily. PrmA family.

The protein resides in the cytoplasm. It carries out the reaction L-lysyl-[protein] + 3 S-adenosyl-L-methionine = N(6),N(6),N(6)-trimethyl-L-lysyl-[protein] + 3 S-adenosyl-L-homocysteine + 3 H(+). Methylates ribosomal protein L11. This chain is Ribosomal protein L11 methyltransferase, found in Burkholderia vietnamiensis (strain G4 / LMG 22486) (Burkholderia cepacia (strain R1808)).